The sequence spans 730 residues: Propionyl-CoA carboxylase alpha chain, mitochondrial (730 aa).

The transit peptide at 1 to 52 (MAGLWVGGSVLVAAGRRGSRSPRPLMRSVALWTLKHVPQYSRQRLLVSRSLC) directs the protein to the mitochondrion. Residues 62-509 (TFDKILIANR…NTKFLSDVYP (448 aa)) enclose the Biotin carboxylation domain. At Lys65 the chain carries N6-acetyllysine; alternate. The residue at position 65 (Lys65) is an N6-succinyllysine; alternate. Residue Lys119 is modified to N6-succinyllysine. Lys150 bears the N6-acetyllysine; alternate mark. An N6-succinyllysine; alternate modification is found at Lys150. Lys154 carries the post-translational modification N6-acetyllysine. Lys177 serves as a coordination point for ATP. Residues 181 to 378 (KLLAKKAKVN…LVQEMIRVAK (198 aa)) form the ATP-grasp domain. Lys188 carries the N6-succinyllysine modification. Lys200 carries the post-translational modification N6-acetyllysine; alternate. Position 200 is an N6-succinyllysine; alternate (Lys200). Residues 209–270 (AREI…PRHI), Glu261, and Asn296 each bind ATP. Ser252 is subject to Phosphoserine. At Lys262 the chain carries N6-succinyllysine. Glu336, Glu349, and Asn351 together coordinate Mg(2+). The Mn(2+) site is built by Glu336, Glu349, and Asn351. Residue Glu349 is part of the active site. An N6-succinyllysine modification is found at Lys407. A biotin-binding site is contributed by Phe409. An N6-succinyllysine mark is found at Lys502, Lys513, and Lys650. Positions 655-730 (KAAEDTSSIL…GEGDLLVELE (76 aa)) constitute a Biotinyl-binding domain. N6-biotinyllysine is present on Lys696.

As to quaternary structure, the holoenzyme is a dodecamer composed of 6 PCCA/alpha subunits and 6 PCCB/beta subunits. Interacts (via the biotin carboxylation domain) with SIRT4. Interacts with SIRT3 and SIRT5. Requires Mg(2+) as cofactor. It depends on Mn(2+) as a cofactor. Biotin serves as cofactor. Post-translationally, acetylated. The biotin cofactor is covalently attached to the C-terminal biotinyl-binding domain and is required for the catalytic activity. Biotinylation is catalyzed by HLCS.

It localises to the mitochondrion matrix. The catalysed reaction is propanoyl-CoA + hydrogencarbonate + ATP = (S)-methylmalonyl-CoA + ADP + phosphate + H(+). The enzyme catalyses butanoyl-CoA + hydrogencarbonate + ATP = (2S)-ethylmalonyl-CoA + ADP + phosphate + H(+). It functions in the pathway metabolic intermediate metabolism; propanoyl-CoA degradation; succinyl-CoA from propanoyl-CoA: step 1/3. In terms of biological role, this is one of the 2 subunits of the biotin-dependent propionyl-CoA carboxylase (PCC), a mitochondrial enzyme involved in the catabolism of odd chain fatty acids, branched-chain amino acids isoleucine, threonine, methionine, and valine and other metabolites. Propionyl-CoA carboxylase catalyzes the carboxylation of propionyl-CoA/propanoyl-CoA to D-methylmalonyl-CoA/(S)-methylmalonyl-CoA. Within the holoenzyme, the alpha subunit catalyzes the ATP-dependent carboxylation of the biotin carried by the biotin carboxyl carrier (BCC) domain, while the beta subunit then tranfers the carboxyl group from carboxylated biotin to propionyl-CoA. Propionyl-CoA carboxylase also significantly acts on butyryl-CoA/butanoyl-CoA, which is converted to ethylmalonyl-CoA/(2S)-ethylmalonyl-CoA at a much lower rate. Other alternative minor substrates include (2E)-butenoyl-CoA/crotonoyl-CoA. This is Propionyl-CoA carboxylase alpha chain, mitochondrial from Sus scrofa (Pig).